Consider the following 961-residue polypeptide: FYVE, RhoGEF and PH domain-containing protein 1 (961 aa).

The segment covering 1–11 (MHGHRAPGGAG) has biased composition (gly residues). The disordered stretch occupies residues 1–353 (MHGHRAPGGA…DEEEEEEKDR (353 aa)). Positions 27 to 38 (PPACADSDPGAS) are enriched in low complexity. Position 48 is a phosphoserine (serine 48). Residues 125–135 (PHPEGPQRLRS) show a composition bias toward basic and acidic residues. Composition is skewed to pro residues over residues 156–165 (GPKPQVPPKP) and 172–190 (RMPPPLEPIPPPPSRPLPA). The SH3-binding motif lies at 171–187 (PRMPPPLEPIPPPPSRP). The span at 199 to 213 (APRAEASPSSAAVSS) shows a compositional bias: low complexity. Phosphoserine is present on serine 205. Residues 231 to 255 (VPGPSPGPPEPVMLPQPTSQPPVPQ) show a composition bias toward pro residues. Basic and acidic residues predominate over residues 273-284 (RDGEKVPNRDSG). Composition is skewed to low complexity over residues 285–294 (IDSISSPSNS) and 316–325 (ALASVPVALA). Positions 335 to 351 (VDSDLEEEDDEEEEEEK) are enriched in acidic residues. In terms of domain architecture, DH spans 373–561 (KVFHIANELL…ATAAEHSNAA (189 aa)). The PH 1 domain maps to 590 to 689 (ELIKEGHILK…WVQAINSTLL (100 aa)). Residues 702-726 (NSTNREDEDTPPNSPNVDLGKRAPT) form a disordered region. Threonine 711 is modified (phosphothreonine). Serine 715 bears the Phosphoserine mark. An FYVE-type zinc finger spans residues 730–790 (EKEVTMCMRC…VCTDCYVALH (61 aa)). The Zn(2+) site is built by cysteine 736, cysteine 739, cysteine 753, cysteine 756, cysteine 761, cysteine 764, cysteine 782, and cysteine 785. In terms of domain architecture, PH 2 spans 821–921 (NSVICSFLHY…WMAVLGRAGR (101 aa)). The interval 925-961 (FCPGPTLSEDREMEEAPVAALGATAEPPESPQTRDKT) is disordered.

In terms of assembly, interacts with DBNL/ABP1 and CTTN. May interact with CCPG1. Binds CDC42. Expressed in fetal heart, brain, lung, kidney and placenta. Less expressed in liver; adult heart, brain, lung, pancreas and skeletal muscle.

The protein localises to the cytoplasm. The protein resides in the cell projection. It localises to the lamellipodium. It is found in the ruffle. Its subcellular location is the cytoskeleton. In terms of biological role, activates CDC42, a member of the Ras-like family of Rho- and Rac proteins, by exchanging bound GDP for free GTP. Plays a role in regulating the actin cytoskeleton and cell shape. The chain is FYVE, RhoGEF and PH domain-containing protein 1 (FGD1) from Homo sapiens (Human).